Consider the following 149-residue polypeptide: MKVILLKDVKGTGKKGEMKEVSDGYARNFLFPKKMAVQADSVAIKELNEKNKSKEIKAQKEYEEAVLLGKQMEEINIEIYSKAGEGGRLFGSITSKEIAEQLKKQKDIDVDKRKILLDEPIRSLGSTFVEIKIHQKVTTKIRVDVKEKQ.

This sequence belongs to the bacterial ribosomal protein bL9 family.

Binds to the 23S rRNA. This chain is Large ribosomal subunit protein bL9, found in Clostridioides difficile (strain 630) (Peptoclostridium difficile).